The following is a 75-amino-acid chain: Cruzioseptin-6 (75 aa).

The N-terminal stretch at 1–22 (MAYLKKSLFLVLFLGLVSLSIC) is a signal peptide. The propeptide occupies 23–43 (EEEKREEENEEEQEDDDQSEE). Residues 24-44 (EEKREEENEEEQEDDDQSEEK) form a disordered region. Positions 30 to 41 (ENEEEQEDDDQS) are enriched in acidic residues.

As to expression, expressed by the skin glands.

It is found in the secreted. Functionally, has antimicrobial activity. The polypeptide is Cruzioseptin-6 (Cruziohyla calcarifer (Splendid leaf frog)).